The sequence spans 259 residues: Ubiquitin-conjugating enzyme E2 J2 (259 aa).

Residues Met1–His226 are Cytoplasmic-facing. Positions Thr12–Glu162 constitute a UBC core domain. Residue Cys94 is the Glycyl thioester intermediate of the active site. A helical; Anchor for type IV membrane protein transmembrane segment spans residues Gly227–Tyr247. Over Thr248–Glu259 the chain is Lumenal.

This sequence belongs to the ubiquitin-conjugating enzyme family. In terms of processing, auto-ubiquitinated.

It is found in the endoplasmic reticulum membrane. The catalysed reaction is S-ubiquitinyl-[E1 ubiquitin-activating enzyme]-L-cysteine + [E2 ubiquitin-conjugating enzyme]-L-cysteine = [E1 ubiquitin-activating enzyme]-L-cysteine + S-ubiquitinyl-[E2 ubiquitin-conjugating enzyme]-L-cysteine.. The protein operates within protein modification; protein ubiquitination. Its function is as follows. Catalyzes the covalent attachment of ubiquitin to other proteins. Seems to function in the selective degradation of misfolded membrane proteins from the endoplasmic reticulum (ERAD). In cooperation with the GATOR2 complex, catalyzes 'Lys-6'-linked ubiquitination of NPRL2. In Homo sapiens (Human), this protein is Ubiquitin-conjugating enzyme E2 J2 (UBE2J2).